We begin with the raw amino-acid sequence, 301 residues long: uncharacterized protein (301 aa).

Residues Glu146, Glu148, and Asp177 each coordinate a divalent metal cation.

Belongs to the FAH family.

This is an uncharacterized protein from Staphylococcus haemolyticus (strain JCSC1435).